The chain runs to 286 residues: uncharacterized protein (286 aa).

Helical transmembrane passes span 52–74, 79–101, 142–161, 168–190, 203–225, and 257–276; these read ILWT…LIGL, LIAI…FLFL, WWDP…VSFF, VLVF…GAIL, IQAT…VALV, and IIWI…ASFM.

Its subcellular location is the cell membrane. This is an uncharacterized protein from Archaeoglobus fulgidus (strain ATCC 49558 / DSM 4304 / JCM 9628 / NBRC 100126 / VC-16).